The sequence spans 932 residues: Protocadherin gamma-A7 (932 aa).

Positions 1 to 28 are cleaved as a signal peptide; sequence MAAQPRGGDCRGFVLLSILLGTPWEAWA. 6 Cadherin domains span residues 29 to 133, 134 to 242, 243 to 347, 348 to 452, 453 to 562, and 570 to 682; these read GRIL…VPRF, LTEE…TPVF, SLPQ…APEV, TMTS…PPTF, PHSS…PPEI, and DGST…EPSD. Topologically, residues 29 to 692 are extracellular; that stretch reads GRILYSVSEE…GPYNYDLTLY (664 aa). 2 N-linked (GlcNAc...) asparagine glycosylation sites follow: asparagine 419 and asparagine 545. Residues 693-713 traverse the membrane as a helical segment; the sequence is LVVAVAAVSCVFLAFVLVLLA. Residues 714–932 are Cytoplasmic-facing; that stretch reads LRLRRWHKSR…KKKSGKKEKK (219 aa). Disordered regions lie at residues 804–841 and 902–932; these read VPSI…WPNN and ATLT…KEKK. Residues 806 to 841 are compositionally biased toward polar residues; the sequence is SIQQAPPNTDWRFSQAQRPGTSGSQNGDDTGTWPNN. Basic residues predominate over residues 922-932; the sequence is NKKKSGKKEKK.

The protein localises to the cell membrane. Potential calcium-dependent cell-adhesion protein. May be involved in the establishment and maintenance of specific neuronal connections in the brain. The protein is Protocadherin gamma-A7 (PCDHGA7) of Pan troglodytes (Chimpanzee).